A 274-amino-acid polypeptide reads, in one-letter code: Rhamnulose-1-phosphate aldolase (274 aa).

Glutamate 117 is an active-site residue. Zn(2+)-binding residues include histidine 141, histidine 143, and histidine 212.

Belongs to the aldolase class II family. RhaD subfamily. As to quaternary structure, homotetramer. Zn(2+) is required as a cofactor.

Its subcellular location is the cytoplasm. The catalysed reaction is L-rhamnulose 1-phosphate = (S)-lactaldehyde + dihydroxyacetone phosphate. It participates in carbohydrate degradation; L-rhamnose degradation; glycerone phosphate from L-rhamnose: step 3/3. In terms of biological role, catalyzes the reversible cleavage of L-rhamnulose-1-phosphate to dihydroxyacetone phosphate (DHAP) and L-lactaldehyde. The polypeptide is Rhamnulose-1-phosphate aldolase (Shigella dysenteriae serotype 1 (strain Sd197)).